The sequence spans 399 residues: Argininosuccinate synthase (399 aa).

12–20 (AFSGGLDTS) serves as a coordination point for ATP. Residue tyrosine 90 coordinates L-citrulline. Glycine 120 contributes to the ATP binding site. Residues threonine 122, asparagine 126, and aspartate 127 each coordinate L-aspartate. Asparagine 126 contributes to the L-citrulline binding site. L-citrulline-binding residues include arginine 130, serine 175, glutamate 260, and tyrosine 272.

This sequence belongs to the argininosuccinate synthase family. Type 1 subfamily. As to quaternary structure, homotetramer.

The protein localises to the cytoplasm. The enzyme catalyses L-citrulline + L-aspartate + ATP = 2-(N(omega)-L-arginino)succinate + AMP + diphosphate + H(+). Its pathway is amino-acid biosynthesis; L-arginine biosynthesis; L-arginine from L-ornithine and carbamoyl phosphate: step 2/3. The polypeptide is Argininosuccinate synthase (Methanothermobacter thermautotrophicus (strain ATCC 29096 / DSM 1053 / JCM 10044 / NBRC 100330 / Delta H) (Methanobacterium thermoautotrophicum)).